Reading from the N-terminus, the 78-residue chain is uncharacterized protein (78 aa).

This is an uncharacterized protein from Methanocaldococcus jannaschii (strain ATCC 43067 / DSM 2661 / JAL-1 / JCM 10045 / NBRC 100440) (Methanococcus jannaschii).